The following is a 412-amino-acid chain: Alanyl-tRNA editing protein Aarsd1 (412 aa).

Zn(2+)-binding residues include H109 and H113. At S174 the chain carries Phosphoserine. Residues C209 and H213 each coordinate Zn(2+).

This sequence belongs to the class-II aminoacyl-tRNA synthetase family. Alax-L subfamily. The cofactor is Zn(2+).

The protein localises to the cytoplasm. In terms of biological role, functions in trans to edit the amino acid moiety from incorrectly charged tRNA(Ala). This Rattus norvegicus (Rat) protein is Alanyl-tRNA editing protein Aarsd1 (Aarsd1).